The primary structure comprises 212 residues: V-type ATP synthase subunit E (212 aa).

Belongs to the V-ATPase E subunit family.

In terms of biological role, produces ATP from ADP in the presence of a proton gradient across the membrane. The sequence is that of V-type ATP synthase subunit E from Nitrosococcus oceani (strain ATCC 19707 / BCRC 17464 / JCM 30415 / NCIMB 11848 / C-107).